A 316-amino-acid polypeptide reads, in one-letter code: Pantothenate kinase (316 aa).

ATP is bound at residue 96-103 (GSVAVGKS).

The protein belongs to the prokaryotic pantothenate kinase family.

The protein localises to the cytoplasm. The enzyme catalyses (R)-pantothenate + ATP = (R)-4'-phosphopantothenate + ADP + H(+). It participates in cofactor biosynthesis; coenzyme A biosynthesis; CoA from (R)-pantothenate: step 1/5. The sequence is that of Pantothenate kinase from Shouchella clausii (strain KSM-K16) (Alkalihalobacillus clausii).